Consider the following 1410-residue polypeptide: SNF2 domain-containing protein CLASSY 3 (1410 aa).

The span at 1 to 12 (MECIGKRVKSRS) shows a compositional bias: basic residues. Disordered stretches follow at residues 1-74 (MECI…SVPN), 87-108 (DLNV…SEQN), 209-330 (GEIE…PIKR), 344-376 (RSGS…QREV), 428-593 (NVSK…LKDK), and 632-654 (EDEA…REDH). The Nuclear localization signal 1 motif lies at 22 to 29 (RKKMETVA). A compositionally biased stretch (polar residues) spans 95 to 108 (GPSSSRLTDGSEQN). Residues 245-266 (SDGEDSSSETDEEEEENQDSED) show a composition bias toward acidic residues. Residues 248–278 (EDSSSETDEEEEENQDSEDNNTKDNVTVESL) adopt a coiled-coil conformation. A compositionally biased stretch (low complexity) spans 276 to 301 (ESLSSEDPSSSSSSSSSSSSSSSSSS). The span at 306-323 (SYVKEVVGDNRDDDDLRK) shows a compositional bias: basic and acidic residues. Positions 328 to 335 (IKRVSLVE) match the Nuclear localization signal 2 motif. A compositionally biased stretch (basic and acidic residues) spans 351–376 (KPRERDNKIQKLNHREEEKKERQREV). A coiled-coil region spans residues 356–377 (DNKIQKLNHREEEKKERQREVV). The span at 428–446 (NVSKYEDSVSINSGKTTGA) shows a compositional bias: polar residues. Basic and acidic residues-rich tracts occupy residues 450–463 (PEVE…ELNT) and 488–504 (EPSR…KEVQ). Residues 576–587 (SSISSGDGYESD) show a composition bias toward low complexity. One can recognise a Helicase ATP-binding domain in the interval 850–1060 (FENSDETGGC…CNVLGLARPK (211 aa)). Residue 863–870 (HAPGTGKT) coordinates ATP. Residues 1011–1014 (DEAH) carry the DEAH box motif. The Nuclear localization signal 3 signature appears at 1132-1139 (QRRVLESI). Residues 1206–1359 (EFVELCEVIK…ELVFACSSRH (154 aa)) form the Helicase C-terminal domain.

Belongs to the SNF2/RAD54 helicase family. In terms of assembly, interacts with NRPD1.

The protein localises to the nucleus. Its function is as follows. Probable chromatin remodeling factor. This is SNF2 domain-containing protein CLASSY 3 (CLSY3) from Arabidopsis thaliana (Mouse-ear cress).